Reading from the N-terminus, the 384-residue chain is S-adenosylmethionine synthase (384 aa).

Residue His-15 coordinates ATP. Residue Asp-17 participates in Mg(2+) binding. Glu-43 is a K(+) binding site. The L-methionine site is built by Glu-56 and Gln-99. The segment at 99 to 109 (QSPDINQGVDK) is flexible loop. ATP is bound by residues 164–166 (DAK), 230–231 (RF), Asp-239, 245–246 (RK), Ala-262, and Lys-266. Asp-239 serves as a coordination point for L-methionine. An L-methionine-binding site is contributed by Lys-270.

Belongs to the AdoMet synthase family. Homotetramer; dimer of dimers. It depends on Mg(2+) as a cofactor. Requires K(+) as cofactor.

The protein localises to the cytoplasm. The enzyme catalyses L-methionine + ATP + H2O = S-adenosyl-L-methionine + phosphate + diphosphate. It functions in the pathway amino-acid biosynthesis; S-adenosyl-L-methionine biosynthesis; S-adenosyl-L-methionine from L-methionine: step 1/1. Its function is as follows. Catalyzes the formation of S-adenosylmethionine (AdoMet) from methionine and ATP. The overall synthetic reaction is composed of two sequential steps, AdoMet formation and the subsequent tripolyphosphate hydrolysis which occurs prior to release of AdoMet from the enzyme. The protein is S-adenosylmethionine synthase of Aliivibrio fischeri (strain ATCC 700601 / ES114) (Vibrio fischeri).